Reading from the N-terminus, the 420-residue chain is PHO85 cyclin-6 (420 aa).

Disordered stretches follow at residues 1-82 (MSIK…ESSF), 134-155 (QGTH…DTSN), and 268-321 (VTTT…GVQR). The segment covering 7–22 (SPSSTNASSSPKSTYS) has biased composition (low complexity). Residue S61 is modified to Phosphoserine. Positions 134–143 (QGTHTVQSST) are enriched in polar residues. A compositionally biased stretch (basic and acidic residues) spans 277-296 (AKHESPSNESSLDKANRGAD). 2 positions are modified to phosphoserine: S281 and S312. Residues 307 to 316 (NENDDSDDEN) are compositionally biased toward acidic residues. Phosphothreonine is present on T317.

The protein belongs to the cyclin family. PHO80 subfamily. As to quaternary structure, forms a cyclin-CDK complex with PHO85. Interacts with the substrate protein YJL084C. Interacts with elongin-C, which stabilizes PCL6. Interacts with the CDK inhibitor (CKI) PHO81.

The protein resides in the cytoplasm. Its subcellular location is the nucleus. In terms of biological role, cyclin partner of the cyclin-dependent kinase (CDK) PHO85. Together with cyclin PCL7, controls glycogen phosphorylase and glycogen synthase activities in response to nutrient availablility. The PCL6-PHO85 cyclin-CDK holoenzyme has GLC8 kinase activity and phosphorylates and inactivates the phosphatase PP1-2 inhibitor GLC8, causing activation of PP1-2, which then dephosphorylates and activates glycogen phosphorylase. PCL6-PHO85 also phosphorylates YJL084C. The protein is PHO85 cyclin-6 (PCL6) of Saccharomyces cerevisiae (strain ATCC 204508 / S288c) (Baker's yeast).